The following is a 207-amino-acid chain: MPLPDFRLIRLLPLAALVLTACSVTTPKGPGKSPDSPQWRQHQQDVRNLNQYQTRGSFAYISDQQKVYARFFWQQTGQDRYRLLLTNPLGSTELELNAQPGNVQLVDNKGQRYTSDDAEEMIGKLTGMPIPLNSLRQWILGLPGDATDYKLDDQYRLSEITYSQNGKNWKVVYGGYDTKTQPAMPANMELTDGGQRIKLKMDNWIVK.

A signal peptide spans 1–21 (MPLPDFRLIRLLPLAALVLTA). A lipid anchor (N-palmitoyl cysteine) is attached at C22. A lipid anchor (S-diacylglycerol cysteine) is attached at C22.

The protein belongs to the LolB family. As to quaternary structure, monomer.

It localises to the cell outer membrane. In terms of biological role, plays a critical role in the incorporation of lipoproteins in the outer membrane after they are released by the LolA protein. The chain is Outer-membrane lipoprotein LolB from Escherichia coli O7:K1 (strain IAI39 / ExPEC).